The primary structure comprises 348 residues: GTP 3',8-cyclase (348 aa).

Positions 24–242 (PFGRAVTYLR…EKQFTLTDID (219 aa)) constitute a Radical SAM core domain. Arg-33 is a GTP binding site. The [4Fe-4S] cluster site is built by Cys-40 and Cys-44. An S-adenosyl-L-methionine-binding site is contributed by Tyr-46. Cys-47 serves as a coordination point for [4Fe-4S] cluster. Residue Arg-82 participates in GTP binding. Gly-86 provides a ligand contact to S-adenosyl-L-methionine. Thr-115 contacts GTP. Ser-139 contributes to the S-adenosyl-L-methionine binding site. Lys-175 provides a ligand contact to GTP. S-adenosyl-L-methionine is bound at residue Met-209. [4Fe-4S] cluster contacts are provided by Cys-272 and Cys-275. 277–279 (RVR) lines the GTP pocket. Residue Cys-289 participates in [4Fe-4S] cluster binding.

The protein belongs to the radical SAM superfamily. MoaA family. In terms of assembly, monomer and homodimer. [4Fe-4S] cluster is required as a cofactor.

It carries out the reaction GTP + AH2 + S-adenosyl-L-methionine = (8S)-3',8-cyclo-7,8-dihydroguanosine 5'-triphosphate + 5'-deoxyadenosine + L-methionine + A + H(+). The protein operates within cofactor biosynthesis; molybdopterin biosynthesis. In terms of biological role, catalyzes the cyclization of GTP to (8S)-3',8-cyclo-7,8-dihydroguanosine 5'-triphosphate. The polypeptide is GTP 3',8-cyclase (Rhizobium etli (strain CIAT 652)).